Here is a 233-residue protein sequence, read N- to C-terminus: Ribonuclease 3 (233 aa).

Positions 4 to 126 (LNKLMERLGH…IVGAIYIDAG (123 aa)) constitute an RNase III domain. Glu39 lines the Mg(2+) pocket. Asp43 is a catalytic residue. Mg(2+)-binding residues include Asp112 and Glu115. The active site involves Glu115. The 70-residue stretch at 153-222 (DAKSLLQEWL…AKRFLELLDD (70 aa)) folds into the DRBM domain.

It belongs to the ribonuclease III family. As to quaternary structure, homodimer. Requires Mg(2+) as cofactor.

The protein localises to the cytoplasm. The enzyme catalyses Endonucleolytic cleavage to 5'-phosphomonoester.. Digests double-stranded RNA. Involved in the processing of primary rRNA transcript to yield the immediate precursors to the large and small rRNAs (23S and 16S). Processes some mRNAs, and tRNAs when they are encoded in the rRNA operon. Processes pre-crRNA and tracrRNA of type II CRISPR loci if present in the organism. The polypeptide is Ribonuclease 3 (Coxiella burnetii (strain Dugway 5J108-111)).